Reading from the N-terminus, the 253-residue chain is Troponin T, fast skeletal muscle isoforms (253 aa).

Residues 1–25 are compositionally biased toward acidic residues; the sequence is MSDTEEVEHGEEEYEEEEEVQEEEV. Disordered stretches follow at residues 1-58 and 97-178; these read MSDT…DIQK and RAER…VLAE. Ser2 carries the N-acetylserine modification. 3 stretches are compositionally biased toward basic and acidic residues: residues 46 to 58, 97 to 139, and 167 to 178; these read PEGE…DIQK, RAER…DDLK, and TARETKKKVLAE.

Belongs to the troponin T family.

Functionally, troponin T is the tropomyosin-binding subunit of troponin, the thin filament regulatory complex which confers calcium-sensitivity to striated muscle actomyosin ATPase activity. The polypeptide is Troponin T, fast skeletal muscle isoforms (TNNT3) (Coturnix japonica (Japanese quail)).